A 485-amino-acid chain; its full sequence is NADH-quinone oxidoreductase subunit N (485 aa).

14 helical membrane passes run 8–28 (LIALLPLLIVGLTVVVVMLSI), 35–55 (FLNATLSVIGLNAALVSLWFV), 71–91 (GFAMLYTGLVLLASLATCTFA), 105–125 (FYLLVLIAALGGILLANANHL), 127–147 (SLFLGIELISLPLFGLVGYAF), 159–179 (YTILSAAASSFLLFGMALVYA), 203–223 (LLAGFGLMIVGLGFKLSLVPF), 235–255 (PAPVSTFLATASKIAIFGVVM), 271–291 (VVLAIIAFASIIFGNLMALSQ), 297–317 (LLGYSSISHLGYLLVALIALQ), 326–346 (VGVYLAGYLFSSLGAFGVVSL), 373–393 (AAVMTVMMLSLAGIPMTLGFI), 408–430 (WWLVGAVVVGSAIGLYYYLRVAV), and 455–475 (IVVLISALLVLVLGVWPQPLI).

This sequence belongs to the complex I subunit 2 family. In terms of assembly, NDH-1 is composed of 13 different subunits. Subunits NuoA, H, J, K, L, M, N constitute the membrane sector of the complex.

The protein localises to the cell inner membrane. It carries out the reaction a quinone + NADH + 5 H(+)(in) = a quinol + NAD(+) + 4 H(+)(out). NDH-1 shuttles electrons from NADH, via FMN and iron-sulfur (Fe-S) centers, to quinones in the respiratory chain. The immediate electron acceptor for the enzyme in this species is believed to be ubiquinone. Couples the redox reaction to proton translocation (for every two electrons transferred, four hydrogen ions are translocated across the cytoplasmic membrane), and thus conserves the redox energy in a proton gradient. The sequence is that of NADH-quinone oxidoreductase subunit N from Escherichia coli O139:H28 (strain E24377A / ETEC).